The sequence spans 498 residues: Glycerol kinase (498 aa).

T13 is an ADP binding site. 3 residues coordinate ATP: T13, T14, and S15. Position 13 (T13) interacts with sn-glycerol 3-phosphate. An ADP-binding site is contributed by R17. R83, E84, Y135, and D244 together coordinate sn-glycerol 3-phosphate. R83, E84, Y135, D244, and Q245 together coordinate glycerol. Positions 266 and 309 each coordinate ADP. 4 residues coordinate ATP: T266, G309, Q313, and G410. Residues G410 and N414 each contribute to the ADP site.

This sequence belongs to the FGGY kinase family.

It catalyses the reaction glycerol + ATP = sn-glycerol 3-phosphate + ADP + H(+). The protein operates within polyol metabolism; glycerol degradation via glycerol kinase pathway; sn-glycerol 3-phosphate from glycerol: step 1/1. Its activity is regulated as follows. Inhibited by fructose 1,6-bisphosphate (FBP). Its function is as follows. Key enzyme in the regulation of glycerol uptake and metabolism. Catalyzes the phosphorylation of glycerol to yield sn-glycerol 3-phosphate. The sequence is that of Glycerol kinase from Koribacter versatilis (strain Ellin345).